The following is a 127-amino-acid chain: MORF4 family-associated protein 1-like 1 (127 aa).

Positions 87-118 form a coiled coil; sequence GEADERVSELCEKAEEKAKEIAKMAEMLVELV.

This sequence belongs to the MORF4 family-associated protein family.

This Homo sapiens (Human) protein is MORF4 family-associated protein 1-like 1 (MRFAP1L1).